The following is a 715-amino-acid chain: Fatty acid oxidation complex subunit alpha (715 aa).

The interval 1–194 is enoyl-CoA hydratase; that stretch reads MHEQRAKPSA…RLGLVDDAVP (194 aa). Residues 310–715 form a 3-hydroxyacyl-CoA dehydrogenase region; sequence HALHRIGILG…QGERFYPQGS (406 aa).

In the N-terminal section; belongs to the enoyl-CoA hydratase/isomerase family. This sequence in the central section; belongs to the 3-hydroxyacyl-CoA dehydrogenase family. Heterotetramer of two alpha chains (FadJ) and two beta chains (FadI).

The protein localises to the cytoplasm. The enzyme catalyses a (3S)-3-hydroxyacyl-CoA = a (2E)-enoyl-CoA + H2O. It carries out the reaction a 4-saturated-(3S)-3-hydroxyacyl-CoA = a (3E)-enoyl-CoA + H2O. It catalyses the reaction a (3S)-3-hydroxyacyl-CoA + NAD(+) = a 3-oxoacyl-CoA + NADH + H(+). The catalysed reaction is (3S)-3-hydroxybutanoyl-CoA = (3R)-3-hydroxybutanoyl-CoA. It functions in the pathway lipid metabolism; fatty acid beta-oxidation. In terms of biological role, catalyzes the formation of a hydroxyacyl-CoA by addition of water on enoyl-CoA. Also exhibits 3-hydroxyacyl-CoA epimerase and 3-hydroxyacyl-CoA dehydrogenase activities. The chain is Fatty acid oxidation complex subunit alpha from Serratia proteamaculans (strain 568).